The following is a 264-amino-acid chain: NAD-capped RNA hydrolase NudC (264 aa).

Positions 99 and 102 each coordinate Zn(2+). Glu112 lines the substrate pocket. Positions 117 and 120 each coordinate Zn(2+). Position 125 (Tyr125) interacts with substrate. In terms of domain architecture, Nudix hydrolase spans 126-253 (PVICPSIIVA…TIARKLIHVT (128 aa)). Positions 162, 178, and 182 each coordinate a divalent metal cation. A Nudix box motif is present at residues 163–184 (GFVEVGETFEQAVQREVFEETG). 196–203 (QPWAFPNS) contributes to the substrate binding site. A divalent metal cation is bound at residue Glu223. Substrate is bound at residue Ala246.

Belongs to the Nudix hydrolase family. NudC subfamily. As to quaternary structure, homodimer. Requires Mg(2+) as cofactor. Mn(2+) is required as a cofactor. Zn(2+) serves as cofactor.

The enzyme catalyses a 5'-end NAD(+)-phospho-ribonucleoside in mRNA + H2O = a 5'-end phospho-adenosine-phospho-ribonucleoside in mRNA + beta-nicotinamide D-ribonucleotide + 2 H(+). It catalyses the reaction NAD(+) + H2O = beta-nicotinamide D-ribonucleotide + AMP + 2 H(+). The catalysed reaction is NADH + H2O = reduced beta-nicotinamide D-ribonucleotide + AMP + 2 H(+). MRNA decapping enzyme that specifically removes the nicotinamide adenine dinucleotide (NAD) cap from a subset of mRNAs by hydrolyzing the diphosphate linkage to produce nicotinamide mononucleotide (NMN) and 5' monophosphate mRNA. The NAD-cap is present at the 5'-end of some mRNAs and stabilizes RNA against 5'-processing. Has preference for mRNAs with a 5'-end purine. Catalyzes the hydrolysis of a broad range of dinucleotide pyrophosphates. This chain is NAD-capped RNA hydrolase NudC, found in Haemophilus influenzae (strain ATCC 51907 / DSM 11121 / KW20 / Rd).